The following is a 410-amino-acid chain: Acetate kinase (410 aa).

Position 7 (Asn-7) interacts with Mg(2+). Position 14 (Lys-14) interacts with ATP. Arg-88 provides a ligand contact to substrate. Asp-145 serves as the catalytic Proton donor/acceptor. ATP contacts are provided by residues 203-207, 278-280, and 326-330; these read HAGNG, DTR, and GIGEN. Glu-379 serves as a coordination point for Mg(2+).

The protein belongs to the acetokinase family. Homodimer. Requires Mg(2+) as cofactor. The cofactor is Mn(2+).

Its subcellular location is the cytoplasm. It carries out the reaction acetate + ATP = acetyl phosphate + ADP. It functions in the pathway metabolic intermediate biosynthesis; acetyl-CoA biosynthesis; acetyl-CoA from acetate: step 1/2. Catalyzes the formation of acetyl phosphate from acetate and ATP. Can also catalyze the reverse reaction. In Aster yellows witches'-broom phytoplasma (strain AYWB), this protein is Acetate kinase.